The primary structure comprises 568 residues: Putative F-box protein At5g39480 (568 aa).

The region spanning 9–55 is the F-box domain; that stretch reads ACLLLTLPEDVFAVISRFLSPSDICNLILCGKSLPALVDTEKMWLVQ. Positions 315 to 337 are disordered; sequence TNVLGESSSSKNTTPSQSEIRVS. Positions 321-332 are enriched in low complexity; sequence SSSSKNTTPSQS.

The polypeptide is Putative F-box protein At5g39480 (Arabidopsis thaliana (Mouse-ear cress)).